Here is a 642-residue protein sequence, read N- to C-terminus: Chaperone protein DnaK (642 aa).

Thr-198 carries the post-translational modification Phosphothreonine; by autocatalysis. Positions 602–642 (EAAGGAEAEAAAGGHGGASGSHDDKVVDADFEEVDGDKKGK) are disordered. The span at 603–613 (AAGGAEAEAAA) shows a compositional bias: low complexity.

Belongs to the heat shock protein 70 family.

Its function is as follows. Acts as a chaperone. The chain is Chaperone protein DnaK from Paramagnetospirillum magneticum (strain ATCC 700264 / AMB-1) (Magnetospirillum magneticum).